The sequence spans 88 residues: Sec-independent protein translocase protein TatA (88 aa).

A helical transmembrane segment spans residues 1-21 (MGGISITQLLIIASIVVVLFG). A disordered region spans residues 39-88 (FKKSMSEDDNTTSTSSDKSSQDADFTAPPIEPKANLACPDEAKNKDKEHV). Residues 49-62 (TTSTSSDKSSQDAD) are compositionally biased toward low complexity. Basic and acidic residues predominate over residues 78 to 88 (DEAKNKDKEHV).

It belongs to the TatA/E family. In terms of assembly, the Tat system comprises two distinct complexes: a TatABC complex, containing multiple copies of TatA, TatB and TatC subunits, and a separate TatA complex, containing only TatA subunits. Substrates initially bind to the TatABC complex, which probably triggers association of the separate TatA complex to form the active translocon.

Its subcellular location is the cell inner membrane. Part of the twin-arginine translocation (Tat) system that transports large folded proteins containing a characteristic twin-arginine motif in their signal peptide across membranes. TatA could form the protein-conducting channel of the Tat system. The sequence is that of Sec-independent protein translocase protein TatA from Sodalis glossinidius (strain morsitans).